A 434-amino-acid polypeptide reads, in one-letter code: ATP-dependent RNA helicase sub2 (434 aa).

The short motif at 59–87 (TGFRDFLLKGELLRAITDCGFEHPSEVQQ) is the Q motif element. Residues 90 to 265 (IPTAILNVDV…KKFMRNPLEV (176 aa)) form the Helicase ATP-binding domain. 103–110 (AKSGLGKT) contacts ATP. The DECD box motif lies at 212–215 (DECD). The region spanning 293 to 430 (KLNELLDSLE…EYPEEGVDSS (138 aa)) is the Helicase C-terminal domain.

It belongs to the DEAD box helicase family. DECD subfamily.

Its subcellular location is the nucleus. The catalysed reaction is ATP + H2O = ADP + phosphate + H(+). Its function is as follows. ATP-binding RNA helicase involved in transcription elongation and required for the export of mRNA out of the nucleus. SUB2 also plays a role in pre-mRNA splicing and spliceosome assembly. May be involved in rDNA and telomeric silencing, and maintenance of genome integrity. The protein is ATP-dependent RNA helicase sub2 (sub2) of Emericella nidulans (strain FGSC A4 / ATCC 38163 / CBS 112.46 / NRRL 194 / M139) (Aspergillus nidulans).